The primary structure comprises 129 residues: Small ribosomal subunit protein uS11 (129 aa).

Belongs to the universal ribosomal protein uS11 family. As to quaternary structure, part of the 30S ribosomal subunit. Interacts with proteins S7 and S18. Binds to IF-3.

Its function is as follows. Located on the platform of the 30S subunit, it bridges several disparate RNA helices of the 16S rRNA. Forms part of the Shine-Dalgarno cleft in the 70S ribosome. This chain is Small ribosomal subunit protein uS11, found in Mesorhizobium japonicum (strain LMG 29417 / CECT 9101 / MAFF 303099) (Mesorhizobium loti (strain MAFF 303099)).